The sequence spans 156 residues: ATP synthase subunit b (156 aa).

The helical transmembrane segment at 5-25 (LTLIGQAIAFAFFVAFCMKFV) threads the bilayer.

The protein belongs to the ATPase B chain family. In terms of assembly, F-type ATPases have 2 components, F(1) - the catalytic core - and F(0) - the membrane proton channel. F(1) has five subunits: alpha(3), beta(3), gamma(1), delta(1), epsilon(1). F(0) has three main subunits: a(1), b(2) and c(10-14). The alpha and beta chains form an alternating ring which encloses part of the gamma chain. F(1) is attached to F(0) by a central stalk formed by the gamma and epsilon chains, while a peripheral stalk is formed by the delta and b chains.

It is found in the cell inner membrane. In terms of biological role, f(1)F(0) ATP synthase produces ATP from ADP in the presence of a proton or sodium gradient. F-type ATPases consist of two structural domains, F(1) containing the extramembraneous catalytic core and F(0) containing the membrane proton channel, linked together by a central stalk and a peripheral stalk. During catalysis, ATP synthesis in the catalytic domain of F(1) is coupled via a rotary mechanism of the central stalk subunits to proton translocation. Component of the F(0) channel, it forms part of the peripheral stalk, linking F(1) to F(0). In Acinetobacter baumannii (strain SDF), this protein is ATP synthase subunit b.